The following is a 292-amino-acid chain: Peroxidase 2 (292 aa).

4 disulfide bridges follow: Cys7/Cys86, Cys40/Cys45, Cys92/Cys288, and Cys171/Cys199. The active-site Proton acceptor is the His38. The Ca(2+) site is built by Asp39, Val42, Gly44, Asp46, and Ser48. The N-linked (GlcNAc...) asparagine glycan is linked to Asn68. Pro134 is a binding site for substrate. A glycan (N-linked (GlcNAc...) asparagine) is linked at Asn139. His164 serves as a coordination point for heme b. Thr165 is a Ca(2+) binding site. Asn179 carries an N-linked (GlcNAc...) asparagine glycan. Ca(2+) contacts are provided by Asp210, Thr213, and Asp218.

It belongs to the peroxidase family. Classical plant (class III) peroxidase subfamily. It depends on Ca(2+) as a cofactor. Heme b is required as a cofactor.

It carries out the reaction 2 a phenolic donor + H2O2 = 2 a phenolic radical donor + 2 H2O. Its function is as follows. Removal of H(2)O(2), oxidation of toxic reductants, biosynthesis and degradation of lignin, suberization, auxin catabolism, response to environmental stresses such as wounding, pathogen attack and oxidative stress. These functions might be dependent on each isozyme/isoform in each plant tissue. This is Peroxidase 2 from Cucumis sativus (Cucumber).